A 335-amino-acid polypeptide reads, in one-letter code: tRNA-dihydrouridine(20/20a) synthase (335 aa).

FMN-binding positions include 19 to 21 (PMM) and Gln-72. Cys-102 acts as the Proton donor in catalysis. FMN is bound by residues Lys-141, His-173, 213–215 (NGG), and 235–236 (GR).

Belongs to the Dus family. DusA subfamily. Requires FMN as cofactor.

The enzyme catalyses 5,6-dihydrouridine(20) in tRNA + NADP(+) = uridine(20) in tRNA + NADPH + H(+). It carries out the reaction 5,6-dihydrouridine(20) in tRNA + NAD(+) = uridine(20) in tRNA + NADH + H(+). It catalyses the reaction 5,6-dihydrouridine(20a) in tRNA + NADP(+) = uridine(20a) in tRNA + NADPH + H(+). The catalysed reaction is 5,6-dihydrouridine(20a) in tRNA + NAD(+) = uridine(20a) in tRNA + NADH + H(+). Catalyzes the synthesis of 5,6-dihydrouridine (D), a modified base found in the D-loop of most tRNAs, via the reduction of the C5-C6 double bond in target uridines. Specifically modifies U20 and U20a in tRNAs. The chain is tRNA-dihydrouridine(20/20a) synthase from Xanthomonas campestris pv. campestris (strain ATCC 33913 / DSM 3586 / NCPPB 528 / LMG 568 / P 25).